Here is a 254-residue protein sequence, read N- to C-terminus: 5-oxoprolinase subunit A (254 aa).

Belongs to the LamB/PxpA family. In terms of assembly, forms a complex composed of PxpA, PxpB and PxpC.

The enzyme catalyses 5-oxo-L-proline + ATP + 2 H2O = L-glutamate + ADP + phosphate + H(+). Its function is as follows. Catalyzes the cleavage of 5-oxoproline to form L-glutamate coupled to the hydrolysis of ATP to ADP and inorganic phosphate. This Gluconobacter oxydans (strain 621H) (Gluconobacter suboxydans) protein is 5-oxoprolinase subunit A.